A 258-amino-acid polypeptide reads, in one-letter code: UPF0246 protein HI_0984 (258 aa).

Belongs to the UPF0246 family.

In Haemophilus influenzae (strain ATCC 51907 / DSM 11121 / KW20 / Rd), this protein is UPF0246 protein HI_0984.